The following is a 545-amino-acid chain: Chaperonin GroEL (545 aa).

ATP-binding positions include 30-33 (TLGP), Lys51, 87-91 (DGTTT), Gly415, and Asp496.

The protein belongs to the chaperonin (HSP60) family. As to quaternary structure, forms a cylinder of 14 subunits composed of two heptameric rings stacked back-to-back. Interacts with the co-chaperonin GroES.

It localises to the cytoplasm. The enzyme catalyses ATP + H2O + a folded polypeptide = ADP + phosphate + an unfolded polypeptide.. Together with its co-chaperonin GroES, plays an essential role in assisting protein folding. The GroEL-GroES system forms a nano-cage that allows encapsulation of the non-native substrate proteins and provides a physical environment optimized to promote and accelerate protein folding. The protein is Chaperonin GroEL of Rhodobacter capsulatus (Rhodopseudomonas capsulata).